A 199-amino-acid polypeptide reads, in one-letter code: MLLELSEEHKEHLAFLPQVDSSVVAEFGRIAVEFLRRGANPKIYEGAARKLNVSSDTVQHGVEGLTYLLTESSKLMISELDFQDSVFVLGFSEELNKLLLQLYLDNRKEIRMILSELAPSLPSYHNLEWRLDVQLASRSLRQQIKPAVTIKLHLNQNGDHNTKILQTDPATLLHLVQQLEQALEEMKTNHCRRVVRNIK.

One can recognise a COMM domain in the interval 123-190; that stretch reads SYHNLEWRLD…QALEEMKTNH (68 aa).

It belongs to the COMM domain-containing protein 2 family. As to quaternary structure, component of the commander complex consisting of the CCC subcomplex and the retriever subcomplex. Component of the CCC (COMMD/CCDC22/CCDC93) subcomplex consisting of COMMD1, COMMD2, COMMD3, COMMD4, COMMD5, COMMD6, COMMD7, COMMD8, COMMD9, COMMD10, CCDC22 and CCDC93; within the complex forms a heterodimer with COMMD3. Interacts with RELA, RELB, NFKB1/p105, NFKB2/p100. Interacts with CCDC22, CCDC93, SCNN1B, CUL3, CUL4B, CUL5, CUL7.

Its subcellular location is the cytoplasm. Scaffold protein in the commander complex that is essential for endosomal recycling of transmembrane cargos; the commander complex is composed of the CCC subcomplex and the retriever subcomplex. May modulate activity of cullin-RING E3 ubiquitin ligase (CRL) complexes. May down-regulate activation of NF-kappa-B. The polypeptide is COMM domain-containing protein 2 (COMMD2) (Pongo abelii (Sumatran orangutan)).